The sequence spans 95 residues: Co-chaperonin GroES (95 aa).

It belongs to the GroES chaperonin family. In terms of assembly, heptamer of 7 subunits arranged in a ring. Interacts with the chaperonin GroEL.

It is found in the cytoplasm. Its function is as follows. Together with the chaperonin GroEL, plays an essential role in assisting protein folding. The GroEL-GroES system forms a nano-cage that allows encapsulation of the non-native substrate proteins and provides a physical environment optimized to promote and accelerate protein folding. GroES binds to the apical surface of the GroEL ring, thereby capping the opening of the GroEL channel. In Rickettsia felis (strain ATCC VR-1525 / URRWXCal2) (Rickettsia azadi), this protein is Co-chaperonin GroES.